Consider the following 1211-residue polypeptide: MVDVNRFKSMQITLASPSKVRSWSYGEVKKPETINYRTLKPEREGLFDEVIFGPTKDWECACGKYKRIRYKGIVCDRCGVEVTRAKVRRERMGHIELKAPVSHIWYFKGIPSRMGLTLDMSPRALEEVIYFAAYVVIDPKDTPLEPKSLLTEREYREKIQEYGHGSFIAKMGAEAIQDLLKRVDLVTEIAELKEELKTATGQKRIKAVRRLDVLDAFNKSGNKPEWMILNILPVIPPDLRPMVQLDGGRFAASDLNDLYRRVINRNNRLARLLELNAPGIIVQNEKRMLQEAVDALIDNGRRGRPITGPGSRPLKSLSHMLKGKQGRFRQNLLGKRVDFSGRSVIAVGPTLKMYQCGVPREMAIELFKPFVMREIVAREFAGNVKAAKRMVERGDERIWDILEEVIKEHPVLLNRAPTLHRLGIQAFEPVLIDGKALRLHPLVCEAYNADFDGDQMAIHVPLSEEAQAEARLLMLAAEHILNPKDGKPVVTPSQDMVLGNYYLTMEDAGREGEGMIFKDKDEAVMAYRNGYVHLHSRVGIAVDSMPSKPWKDSQRHKIMVTTVGKILFNDIMPEDLPYLQEPNNANLTEGTPDKYFLEPGQNIQEVIDSLPINVPFKKKNLGNIIAETFKRFRTTETSAFLDRLKDLGYYHSTLAGLTVGIADIPVIDNKAEIIEAAHHRVEEINKAFRRGLMTDDDRYVAVTTTWREAKEALEKRLIETQDPKNPIVMMMDSGARGNISNFSQLAGMRGLMAAPNGRIMELPILSNFREGLSVLEMFFSTHGARKGMTDTALKTADSGYLTRRLVDVAQDVIIREDDCGTDRGLLIRAITDGKEVTETLEERLQGRYTRKSVKHPETGEVLIGADQLITEDMARKIVDAGVEEVTIRSVFTCATRHGVCRHCYGINLATGDAVEVGEAVGTIAAQSIGEPGTQLTMRTFHTGGVASNTDITQGLPRIQEIFEARNPKGEAVITEVKGTVIEIEEDASTRTKKVYVQGKTGMGEYVVPFTARMKVEVGDEVNRGAALTEGSIQPKHLLEVRDTLSVETYLLAEVQKVYRSQGVEIGDKHVEVMVRQMLRKVRVMDPGDTDLLPGTLMDIADFTDANKEIVISGGIPATSRPVLMGITKASLETNSFLSAASFQETTRVLTDAAIRGKKDHLLGLKENVIIGKIIPAGTGMVRYRNIEPQAINEVEVIEEAEATEEPAIIKE.

Cysteine 60, cysteine 62, cysteine 75, and cysteine 78 together coordinate Zn(2+). Mg(2+) contacts are provided by aspartate 450, aspartate 452, and aspartate 454. Residues cysteine 819, cysteine 893, cysteine 900, and cysteine 903 each coordinate Zn(2+).

It belongs to the RNA polymerase beta' chain family. As to quaternary structure, the RNAP catalytic core consists of 2 alpha, 1 beta, 1 beta' and 1 omega subunit. When a sigma factor is associated with the core the holoenzyme is formed, which can initiate transcription. Requires Mg(2+) as cofactor. The cofactor is Zn(2+).

The enzyme catalyses RNA(n) + a ribonucleoside 5'-triphosphate = RNA(n+1) + diphosphate. Its function is as follows. DNA-dependent RNA polymerase catalyzes the transcription of DNA into RNA using the four ribonucleoside triphosphates as substrates. The protein is DNA-directed RNA polymerase subunit beta' of Streptococcus equi subsp. zooepidemicus (strain H70).